The sequence spans 440 residues: Streptokinase C (440 aa).

Residues 1–26 (MKNYLSFGMFALLFALTFGTVNSVQA) form the signal peptide.

This protein is not a protease, but it activates plasminogen by complexing with it. As a potential virulence factor, it is thought to prevent the formation of effective fibrin barriers around the site of infection, thereby contributing to the invasiveness of the cells. This chain is Streptokinase C (skc), found in Streptococcus dysgalactiae subsp. equisimilis (Streptococcus equisimilis).